A 57-amino-acid polypeptide reads, in one-letter code: Aminopeptidase A (57 aa).

At 1–57 (YLTDHYFKVDLNSTVTQQRFLLDPSELAGITIMQPSDSNIEWLKQYRDDVATWLENS) the chain is on the extracellular side. N-linked (GlcNAc...) asparagine glycosylation is present at asparagine 12.

The protein belongs to the peptidase M1 family. Homodimer; disulfide-linked. Zn(2+) serves as cofactor.

Its subcellular location is the cell membrane. The enzyme catalyses Release of N-terminal glutamate (and to a lesser extent aspartate) from a peptide.. Inhibited by the aminopeptidase competitive inhibitors amastatin (Leu and acidic inhibitor), and bestatin (Leu inhibitor), by chelating agents EDTA, and 1,10-Phenanthroline, as well as by Zn(2+) ions. Substrate specificity is modulated by Ca(2+), Ba(2+), and Mn(2+) ions which enhances the enzymatic activity for cleavage of acidic residues. Its function is as follows. Venom protein that cleaves N-terminal acidic residues from peptides with high potency in presence of calcium. It may have several roles in venom including alteration of blood pressure by cleaving circulating angiotensin-2, general degradation of host tissue, increase of permeability to other venom components, and/or processing of other toxins in the venom. This is Aminopeptidase A from Gloydius blomhoffii (Mamushi).